The following is a 182-amino-acid chain: Isopentenyl-diphosphate Delta-isomerase (182 aa).

Residues histidine 25 and histidine 32 each contribute to the Mn(2+) site. One can recognise a Nudix hydrolase domain in the interval 30-164 (LLHLAFSSWL…PWAFSPWMVM (135 aa)). The active site involves cysteine 67. Histidine 69 provides a ligand contact to Mn(2+). Glutamate 87 provides a ligand contact to Mg(2+). 2 residues coordinate Mn(2+): glutamate 114 and glutamate 116. Glutamate 116 is an active-site residue.

It belongs to the IPP isomerase type 1 family. As to quaternary structure, homodimer. The cofactor is Mg(2+). Mn(2+) serves as cofactor.

The protein resides in the cytoplasm. The catalysed reaction is isopentenyl diphosphate = dimethylallyl diphosphate. It functions in the pathway isoprenoid biosynthesis; dimethylallyl diphosphate biosynthesis; dimethylallyl diphosphate from isopentenyl diphosphate: step 1/1. Functionally, catalyzes the 1,3-allylic rearrangement of the homoallylic substrate isopentenyl (IPP) to its highly electrophilic allylic isomer, dimethylallyl diphosphate (DMAPP). In Escherichia coli O127:H6 (strain E2348/69 / EPEC), this protein is Isopentenyl-diphosphate Delta-isomerase.